The primary structure comprises 512 residues: Cytochrome P450 26B1 (512 aa).

Cys441 contributes to the heme binding site.

Belongs to the cytochrome P450 family. Heme serves as cofactor.

It localises to the endoplasmic reticulum membrane. Its subcellular location is the microsome membrane. It carries out the reaction all-trans-retinoate + reduced [NADPH--hemoprotein reductase] + O2 = all-trans-4-hydroxyretinoate + oxidized [NADPH--hemoprotein reductase] + H2O + H(+). The catalysed reaction is all-trans-retinoate + reduced [NADPH--hemoprotein reductase] + O2 = all-trans-18-hydroxyretinoate + oxidized [NADPH--hemoprotein reductase] + H2O + H(+). Its function is as follows. A cytochrome P450 monooxygenase involved in the metabolism of retinoates (RAs), the active metabolites of vitamin A, and critical signaling molecules in animals. RAs exist as at least four different isomers: all-trans-RA (atRA), 9-cis-RA, 13-cis-RA, and 9,13-dicis-RA, where atRA is considered to be the biologically active isomer, although 9-cis-RA and 13-cis-RA also have activity. Catalyzes the hydroxylation of atRA primarily at C-4 and C-18, thereby contributing to the regulation of atRA homeostasis and signaling. Hydroxylation of atRA limits its biological activity and initiates a degradative process leading to its eventual elimination. Involved in the convertion of atRA to all-trans-4-oxo-RA. Can oxidize all-trans-13,14-dihydroretinoate (DRA) to metabolites which could include all-trans-4-oxo-DRA, all-trans-4-hydroxy-DRA, all-trans-5,8-epoxy-DRA, and all-trans-18-hydroxy-DRA. Shows preference for the following substrates: atRA &gt; 9-cis-RA &gt; 13-cis-RA. Plays a central role in germ cell development: acts by degrading RAs in the developing testis, preventing STRA8 expression, thereby leading to delay of meiosis. Required for the maintenance of the undifferentiated state of male germ cells during embryonic development in Sertoli cells, inducing arrest in G0 phase of the cell cycle and preventing meiotic entry. Plays a role in skeletal development, both at the level of patterning and in the ossification of bone and the establishment of some synovial joints. Essential for postnatal survival. Also has a significant activity in oxidation of tazarotenic acid and may therefore metabolize that xenobiotic in vivo. This chain is Cytochrome P450 26B1 (CYP26B1), found in Bos taurus (Bovine).